The following is a 622-amino-acid chain: MTTLLSTIDSPKALRQLNEAKLPQVAQEMRDHIIECVSQSGGHLGASLGVVELTIALHYVFNTPDDRLVWDVGHQSYGHKVLTGRRDQLASIRQRHGLSGFTKRSESPYDPFGTGHSSTSISAAMGMARAAKANGIQRKAVAVIGDGAMGAGMAFEALNHAGHDNHDLDLVVVLNDNEMSISPNVGALSSYLNRMLSGGAYNAFRDGTGKVLKTISRSMWDAAKKAEEHVKGLVMPGTLFEELGFTYFGPINGHDFDALLPTLRNVQKLGGPILLHVITKKGKGFPPAEEHPCTYHGVAPFDKDTGIIQSSSGGTSYTKVFAQELCALAEQNPHIHAITAAMREGTGLNLFEKRFPERFHDVGIAEQHAVTFAAGLATEGILPVVAIYSTFMQRAYDQLIHDVALQDLPVIFALDRAGLVGADGATHAGAYDLSYLRTVPGMTIMAPADENELRHMLHTAVALNKPVALRYPRGTALGLPPEPPHVLEIGRGRTLRKGEHAAILAVGQPVHPALEAAAILEQQGISVSVYDARFVKPLDQRLLQEVAMHGVVLVVEENAVQGGFGSAVLESLSNQGALDRGLKIRCMGIPDRYIPHGTQKELRGEIGLDAVGIATTLKELLG.

Thiamine diphosphate is bound by residues His74 and 115–117 (GHS). Asp146 serves as a coordination point for Mg(2+). Residues 147-148 (GA), Asn177, Phe285, and Glu366 contribute to the thiamine diphosphate site. Asn177 serves as a coordination point for Mg(2+).

Belongs to the transketolase family. DXPS subfamily. Homodimer. The cofactor is Mg(2+). Requires thiamine diphosphate as cofactor.

It carries out the reaction D-glyceraldehyde 3-phosphate + pyruvate + H(+) = 1-deoxy-D-xylulose 5-phosphate + CO2. It functions in the pathway metabolic intermediate biosynthesis; 1-deoxy-D-xylulose 5-phosphate biosynthesis; 1-deoxy-D-xylulose 5-phosphate from D-glyceraldehyde 3-phosphate and pyruvate: step 1/1. Functionally, catalyzes the acyloin condensation reaction between C atoms 2 and 3 of pyruvate and glyceraldehyde 3-phosphate to yield 1-deoxy-D-xylulose-5-phosphate (DXP). The chain is 1-deoxy-D-xylulose-5-phosphate synthase from Magnetococcus marinus (strain ATCC BAA-1437 / JCM 17883 / MC-1).